Reading from the N-terminus, the 332-residue chain is Malate dehydrogenase, cytoplasmic (332 aa).

NAD(+)-binding positions include 16-17 (QI), D43, and G90. R99 lines the oxaloacetate pocket. NAD(+) is bound by residues Q113 and N132. N132, R163, H188, and S243 together coordinate oxaloacetate. The active-site Proton acceptor is H188.

It belongs to the LDH/MDH superfamily. MDH type 2 family. As to quaternary structure, monomer. As to expression, expressed constitutively in roots.

The protein localises to the cell membrane. It catalyses the reaction (S)-malate + NAD(+) = oxaloacetate + NADH + H(+). In terms of biological role, malate dehydrogenase; catalyzes a reversible NAD-dependent dehydrogenase reaction involved in central metabolism and redox homeostasis. The protein is Malate dehydrogenase, cytoplasmic of Zea mays (Maize).